A 206-amino-acid polypeptide reads, in one-letter code: dITP/XTP pyrophosphatase (206 aa).

Position 10–15 (10–15) interacts with substrate; it reads SGNAGK. Mg(2+) contacts are provided by Glu-40 and Asp-69. Asp-69 (proton acceptor) is an active-site residue. Substrate contacts are provided by residues Ser-70, 148 to 151, Lys-171, and 176 to 177; these read FGYD and HR.

Belongs to the HAM1 NTPase family. As to quaternary structure, homodimer. Mg(2+) serves as cofactor.

It carries out the reaction XTP + H2O = XMP + diphosphate + H(+). The enzyme catalyses dITP + H2O = dIMP + diphosphate + H(+). It catalyses the reaction ITP + H2O = IMP + diphosphate + H(+). Pyrophosphatase that catalyzes the hydrolysis of nucleoside triphosphates to their monophosphate derivatives, with a high preference for the non-canonical purine nucleotides XTP (xanthosine triphosphate), dITP (deoxyinosine triphosphate) and ITP. Seems to function as a house-cleaning enzyme that removes non-canonical purine nucleotides from the nucleotide pool, thus preventing their incorporation into DNA/RNA and avoiding chromosomal lesions. This Synechococcus sp. (strain CC9311) protein is dITP/XTP pyrophosphatase.